The primary structure comprises 103 residues: Large ribosomal subunit protein eL14 (103 aa).

It belongs to the eukaryotic ribosomal protein eL14 family.

This Pyrobaculum arsenaticum (strain DSM 13514 / JCM 11321 / PZ6) protein is Large ribosomal subunit protein eL14.